The primary structure comprises 312 residues: Heme oxygenase 2 (312 aa).

At Ser-2 the chain carries N-acetylserine. At Ser-2 the chain carries Phosphoserine. His-41 contacts heme b. HRM repeat units lie at residues 260–265 and 277–282; these read KCPYYA and SCPFRA. Residues Cys-261 and Cys-278 each carry the S-nitrosocysteine modification.

The protein belongs to the heme oxygenase family. S-nitrosylated by BLVRB.

The protein localises to the microsome. It localises to the endoplasmic reticulum. The enzyme catalyses heme b + 3 reduced [NADPH--hemoprotein reductase] + 3 O2 = biliverdin IXalpha + CO + Fe(2+) + 3 oxidized [NADPH--hemoprotein reductase] + 3 H2O + H(+). Functionally, heme oxygenase cleaves the heme ring at the alpha methene bridge to form biliverdin. Biliverdin is subsequently converted to bilirubin by biliverdin reductase. Under physiological conditions, the activity of heme oxygenase is highest in the spleen, where senescent erythrocytes are sequestrated and destroyed. Heme oxygenase 2 could be implicated in the production of carbon monoxide in brain where it could act as a neurotransmitter. The sequence is that of Heme oxygenase 2 (HMOX2) from Oryctolagus cuniculus (Rabbit).